The following is a 398-amino-acid chain: Bifunctional enzyme IspD/IspF (398 aa).

Positions 1–234 (MTNSPRTAAI…SRLMAALGDI (234 aa)) are 2-C-methyl-D-erythritol 4-phosphate cytidylyltransferase. The segment at 235–398 (RTGTGYDVHA…LPWGADGLAG (164 aa)) is 2-C-methyl-D-erythritol 2,4-cyclodiphosphate synthase. 2 residues coordinate a divalent metal cation: Asp-241 and His-243. 4-CDP-2-C-methyl-D-erythritol 2-phosphate-binding positions include 241 to 243 (DVH) and 267 to 268 (HS). His-275 is a binding site for a divalent metal cation. 4-CDP-2-C-methyl-D-erythritol 2-phosphate is bound by residues 289-291 (DIG), 365-368 (TTSE), Phe-372, and Arg-375.

This sequence in the N-terminal section; belongs to the IspD/TarI cytidylyltransferase family. IspD subfamily. The protein in the C-terminal section; belongs to the IspF family. Requires a divalent metal cation as cofactor.

The enzyme catalyses 2-C-methyl-D-erythritol 4-phosphate + CTP + H(+) = 4-CDP-2-C-methyl-D-erythritol + diphosphate. The catalysed reaction is 4-CDP-2-C-methyl-D-erythritol 2-phosphate = 2-C-methyl-D-erythritol 2,4-cyclic diphosphate + CMP. Its pathway is isoprenoid biosynthesis; isopentenyl diphosphate biosynthesis via DXP pathway; isopentenyl diphosphate from 1-deoxy-D-xylulose 5-phosphate: step 2/6. The protein operates within isoprenoid biosynthesis; isopentenyl diphosphate biosynthesis via DXP pathway; isopentenyl diphosphate from 1-deoxy-D-xylulose 5-phosphate: step 4/6. Its function is as follows. Bifunctional enzyme that catalyzes the formation of 4-diphosphocytidyl-2-C-methyl-D-erythritol from CTP and 2-C-methyl-D-erythritol 4-phosphate (MEP) (IspD), and catalyzes the conversion of 4-diphosphocytidyl-2-C-methyl-D-erythritol 2-phosphate (CDP-ME2P) to 2-C-methyl-D-erythritol 2,4-cyclodiphosphate (ME-CPP) with a corresponding release of cytidine 5-monophosphate (CMP) (IspF). The protein is Bifunctional enzyme IspD/IspF of Rhodopseudomonas palustris (strain TIE-1).